Consider the following 270-residue polypeptide: Fibroblast growth factor 5 (270 aa).

Positions 1-20 are cleaved as a signal peptide; sequence MSLSLLLLLFLSHLILSAWA. The tract at residues 26–84 is disordered; the sequence is LAPKGQPGPAATGRNPGGAGGSSTSGGTTSSSSSSVSSAPGASPGIRGSGSEQGSFQWS. Gly residues predominate over residues 40-49; that stretch reads NPGGAGGSST. Residues 50-70 are compositionally biased toward low complexity; it reads SGGTTSSSSSSVSSAPGASPG. Residues 75-84 are compositionally biased toward polar residues; the sequence is GSEQGSFQWS. N-linked (GlcNAc...) asparagine glycosylation occurs at asparagine 112. A disordered region spans residues 237–257; that stretch reads EKKKPPSHVKPKVPLSAPRKS.

It belongs to the heparin-binding growth factors family. As to quaternary structure, interacts with FGFR1 and FGFR2. Affinity between fibroblast growth factors (FGFs) and their receptors is increased by heparan sulfate glycosaminoglycans that function as coreceptors.

The protein localises to the secreted. In terms of biological role, plays an important role in the regulation of cell proliferation and cell differentiation. Required for normal regulation of the hair growth cycle. Functions as an inhibitor of hair elongation by promoting progression from anagen, the growth phase of the hair follicle, into catagen the apoptosis-induced regression phase. The polypeptide is Fibroblast growth factor 5 (FGF5) (Canis lupus familiaris (Dog)).